Consider the following 204-residue polypeptide: Urease accessory protein UreG (204 aa).

Residue 12-19 (GPVGSGKT) coordinates GTP.

Belongs to the SIMIBI class G3E GTPase family. UreG subfamily. As to quaternary structure, homodimer. UreD, UreF and UreG form a complex that acts as a GTP-hydrolysis-dependent molecular chaperone, activating the urease apoprotein by helping to assemble the nickel containing metallocenter of UreC. The UreE protein probably delivers the nickel.

It localises to the cytoplasm. Its function is as follows. Facilitates the functional incorporation of the urease nickel metallocenter. This process requires GTP hydrolysis, probably effectuated by UreG. This chain is Urease accessory protein UreG, found in Pseudomonas fluorescens (strain Pf0-1).